We begin with the raw amino-acid sequence, 203 residues long: GTP cyclohydrolase-2 (203 aa).

49–53 (RIHSE) lines the GTP pocket. Residues cysteine 54, cysteine 65, and cysteine 67 each contribute to the Zn(2+) site. GTP contacts are provided by residues glutamine 70, 92 to 94 (EGR), and threonine 114. Aspartate 126 acts as the Proton acceptor in catalysis. The active-site Nucleophile is arginine 128. The GTP site is built by threonine 149 and lysine 154.

It belongs to the GTP cyclohydrolase II family. It depends on Zn(2+) as a cofactor.

It catalyses the reaction GTP + 4 H2O = 2,5-diamino-6-hydroxy-4-(5-phosphoribosylamino)-pyrimidine + formate + 2 phosphate + 3 H(+). It functions in the pathway cofactor biosynthesis; riboflavin biosynthesis; 5-amino-6-(D-ribitylamino)uracil from GTP: step 1/4. In terms of biological role, catalyzes the conversion of GTP to 2,5-diamino-6-ribosylamino-4(3H)-pyrimidinone 5'-phosphate (DARP), formate and pyrophosphate. This Shewanella sp. (strain ANA-3) protein is GTP cyclohydrolase-2.